The following is a 205-amino-acid chain: Protein N-terminal glutamine amidohydrolase (205 aa).

Active-site residues include C28, H81, and D97.

The protein belongs to the NTAQ1 family. In terms of assembly, monomer.

The protein resides in the cytoplasm. It localises to the cytosol. It is found in the nucleus. It catalyses the reaction N-terminal L-glutaminyl-[protein] + H2O = N-terminal L-glutamyl-[protein] + NH4(+). Functionally, mediates the side-chain deamidation of N-terminal glutamine residues to glutamate, an important step in N-end rule pathway of protein degradation. Conversion of the resulting N-terminal glutamine to glutamate renders the protein susceptible to arginylation, polyubiquitination and degradation as specified by the N-end rule. Does not act on substrates with internal or C-terminal glutamine and does not act on non-glutamine residues in any position. Does not deaminate acetylated N-terminal glutamine. With the exception of proline, all tested second-position residues on substrate peptides do not greatly influence the activity. In contrast, a proline at position 2, virtually abolishes deamidation of N-terminal glutamine. The protein is Protein N-terminal glutamine amidohydrolase of Homo sapiens (Human).